A 95-amino-acid chain; its full sequence is Small ribosomal subunit protein bS18 (95 aa).

This sequence belongs to the bacterial ribosomal protein bS18 family. In terms of assembly, part of the 30S ribosomal subunit. Forms a tight heterodimer with protein bS6.

In terms of biological role, binds as a heterodimer with protein bS6 to the central domain of the 16S rRNA, where it helps stabilize the platform of the 30S subunit. The sequence is that of Small ribosomal subunit protein bS18 from Rickettsia rickettsii (strain Sheila Smith).